Here is a 185-residue protein sequence, read N- to C-terminus: Protein TIFY 5 (185 aa).

Residues 38 to 72 (AAEARRNLTIFYNGRMCAVNVTELQARTIISMASQ) enclose the Tify domain. The disordered stretch occupies residues 77–185 (KQQQQQIQGR…RAAAPLYARR (109 aa)). Positions 137–157 (PRAGLQAAAAAAPTMNQPPAA) are enriched in low complexity. The Jas signature appears at 155–182 (PAASGLSMKRSLQRFLEKRKTRAAAPLY). Positions 162–169 (MKRSLQRF) match the Nuclear localization signal motif.

Belongs to the TIFY/JAZ family. Post-translationally, ubiquitinated. Targeted for degradation by the SCF(COI1) E3 ubiquitin ligase-proteasome pathway during jasmonate signaling.

The protein localises to the nucleus. Its function is as follows. Repressor of jasmonate responses. The protein is Protein TIFY 5 of Oryza sativa subsp. indica (Rice).